A 195-amino-acid polypeptide reads, in one-letter code: MALTPTFSRAPDIAPAPKGIIDPATGRPIGANDPTFLSISSELADRGFLVTSADELINWARTGSLMWMTFGLACCAVEMMQMSMPRYDCERFGFAPRGSPRQSDVMIVAGTLTNKMAPALRKVYDQMPEPRYVISMGSCANGGGYYHYSYSVVRGCDRVVPVDIYVPGCPPSAEALLYGVLLLQRKIRRTGTIER.

C74, C75, C139, and C169 together coordinate [4Fe-4S] cluster.

The protein belongs to the complex I 20 kDa subunit family. NDH-1 is composed of 14 different subunits. Subunits NuoB, C, D, E, F, and G constitute the peripheral sector of the complex. It depends on [4Fe-4S] cluster as a cofactor.

It is found in the cell inner membrane. The enzyme catalyses a quinone + NADH + 5 H(+)(in) = a quinol + NAD(+) + 4 H(+)(out). In terms of biological role, NDH-1 shuttles electrons from NADH, via FMN and iron-sulfur (Fe-S) centers, to quinones in the respiratory chain. The immediate electron acceptor for the enzyme in this species is believed to be ubiquinone. Couples the redox reaction to proton translocation (for every two electrons transferred, four hydrogen ions are translocated across the cytoplasmic membrane), and thus conserves the redox energy in a proton gradient. The protein is NADH-quinone oxidoreductase subunit B of Methylorubrum populi (strain ATCC BAA-705 / NCIMB 13946 / BJ001) (Methylobacterium populi).